The primary structure comprises 1138 residues: Nonsense-mediated mRNA decay factor SMG7 (1138 aa).

S2 carries the N-acetylserine modification. TPR repeat units lie at residues Q152–N185 and Q187–F219. Disordered stretches follow at residues A515–R612, S649–A745, Q838–P871, S990–E1090, and S1106–H1138. Position 519 is a phosphoserine (S519). Residues V525 to D537 are compositionally biased toward polar residues. Residues E548–K582 are compositionally biased toward basic and acidic residues. Position 575 is a phosphothreonine (T575). Composition is skewed to polar residues over residues P584–F597 and S649–R673. Over residues P674–S721 the composition is skewed to low complexity. 2 positions are modified to phosphoserine: S732 and S848. The segment covering P854 to K868 has biased composition (basic and acidic residues). The segment covering S990 to T999 has biased composition (polar residues). Positions P1000–P1026 are enriched in low complexity. Positions D1037 to K1051 are enriched in basic and acidic residues. A compositionally biased stretch (polar residues) spans S1063 to W1082. Over residues Q1118–G1132 the composition is skewed to low complexity.

In terms of assembly, part of a complex that contains SMG5, SMG7, PPP2CA, a short isoform of UPF3A (isoform UPF3AS, but not isoform UPF3AL) and phosphorylated UPF1. Interacts with DHX34; the interaction is RNA-independent.

Its subcellular location is the cytoplasm. The protein resides in the nucleus. Functionally, plays a role in nonsense-mediated mRNA decay. Recruits UPF1 to cytoplasmic mRNA decay bodies. Together with SMG5 is thought to provide a link to the mRNA degradation machinery involving exonucleolytic pathways, and to serve as an adapter for UPF1 to protein phosphatase 2A (PP2A), thereby triggering UPF1 dephosphorylation. This Mus musculus (Mouse) protein is Nonsense-mediated mRNA decay factor SMG7.